The following is a 374-amino-acid chain: Chaperone protein DnaJ (374 aa).

Residues 5–70 (DFYEILGVGK…QKRDAYDRYG (66 aa)) enclose the J domain. The tract at residues 29–50 (AMKHHPDRNPDSKGAEDKFKEA) is disordered. The span at 35 to 50 (DRNPDSKGAEDKFKEA) shows a compositional bias: basic and acidic residues. A CR-type zinc finger spans residues 134 to 212 (GYDTTIRVPS…CSGAGKIKRN (79 aa)). 8 residues coordinate Zn(2+): C147, C150, C164, C167, C186, C189, C200, and C203. CXXCXGXG motif repeat units follow at residues 147-154 (CETCDGSG), 164-171 (CTTCGGHG), 186-193 (CPKCHGSG), and 200-207 (CGTCSGAG).

Belongs to the DnaJ family. Homodimer. It depends on Zn(2+) as a cofactor.

The protein localises to the cytoplasm. Participates actively in the response to hyperosmotic and heat shock by preventing the aggregation of stress-denatured proteins and by disaggregating proteins, also in an autonomous, DnaK-independent fashion. Unfolded proteins bind initially to DnaJ; upon interaction with the DnaJ-bound protein, DnaK hydrolyzes its bound ATP, resulting in the formation of a stable complex. GrpE releases ADP from DnaK; ATP binding to DnaK triggers the release of the substrate protein, thus completing the reaction cycle. Several rounds of ATP-dependent interactions between DnaJ, DnaK and GrpE are required for fully efficient folding. Also involved, together with DnaK and GrpE, in the DNA replication of plasmids through activation of initiation proteins. The protein is Chaperone protein DnaJ of Janthinobacterium sp. (strain Marseille) (Minibacterium massiliensis).